Reading from the N-terminus, the 88-residue chain is Large ribosomal subunit protein eL34 (88 aa).

This sequence belongs to the eukaryotic ribosomal protein eL34 family.

The chain is Large ribosomal subunit protein eL34 from Methanobrevibacter smithii (strain ATCC 35061 / DSM 861 / OCM 144 / PS).